Here is a 333-residue protein sequence, read N- to C-terminus: Glycerol-3-phosphate dehydrogenase [NAD(P)+] (333 aa).

NADPH is bound by residues S10, W11, H31, R32, and K105. The sn-glycerol 3-phosphate site is built by K105, G136, and S138. Residue A140 participates in NADPH binding. Sn-glycerol 3-phosphate-binding residues include K191, D244, S254, R255, and N256. The Proton acceptor role is filled by K191. R255 contacts NADPH. The NADPH site is built by I279 and E281.

The protein belongs to the NAD-dependent glycerol-3-phosphate dehydrogenase family.

The protein localises to the cytoplasm. It catalyses the reaction sn-glycerol 3-phosphate + NAD(+) = dihydroxyacetone phosphate + NADH + H(+). The catalysed reaction is sn-glycerol 3-phosphate + NADP(+) = dihydroxyacetone phosphate + NADPH + H(+). It participates in membrane lipid metabolism; glycerophospholipid metabolism. Functionally, catalyzes the reduction of the glycolytic intermediate dihydroxyacetone phosphate (DHAP) to sn-glycerol 3-phosphate (G3P), the key precursor for phospholipid synthesis. The polypeptide is Glycerol-3-phosphate dehydrogenase [NAD(P)+] (Pelodictyon phaeoclathratiforme (strain DSM 5477 / BU-1)).